Consider the following 387-residue polypeptide: Mannitol-1-phosphate 5-dehydrogenase (387 aa).

3–14 provides a ligand contact to NAD(+); it reads ALHFGAGNIGRG.

It belongs to the mannitol dehydrogenase family.

It catalyses the reaction D-mannitol 1-phosphate + NAD(+) = beta-D-fructose 6-phosphate + NADH + H(+). This chain is Mannitol-1-phosphate 5-dehydrogenase, found in Yersinia pseudotuberculosis serotype IB (strain PB1/+).